The primary structure comprises 589 residues: Polypeptide N-acetylgalactosaminyltransferase 4 (589 aa).

Over 1-11 (MLPRMLKMKTV) the chain is Cytoplasmic. The helical; Signal-anchor for type II membrane protein transmembrane segment at 12-31 (GTVLAVIWLFGLAFIYVQST) threads the bilayer. At 32–589 (SSSLRPPGRH…WIFEKLDTYE (558 aa)) the chain is on the lumenal side. The tract at residues 33 to 73 (SSLRPPGRHPPPLPQLDPLIPQNPPQNDEIRPKKSAPPIPT) is disordered. Disulfide bonds link Cys-140/Cys-369, Cys-360/Cys-438, Cys-471/Cys-488, Cys-514/Cys-531, and Cys-553/Cys-571. The interval 150–255 (MQPTTVIITY…QKWLEPLLAR (106 aa)) is catalytic subdomain A. 2 residues coordinate substrate: Asp-191 and Arg-216. Asp-239 is a binding site for Mn(2+). Substrate is bound at residue Ser-240. A Mn(2+)-binding site is contributed by His-241. A catalytic subdomain B region spans residues 315 to 377 (PIRSPTMAGG…PCSRVGHVFR (63 aa)). Trp-346 serves as a coordination point for substrate. Mn(2+) is bound at residue His-374. Residues Arg-377, His-380, and Tyr-382 each coordinate substrate. One can recognise a Ricin B-type lectin domain in the interval 458–589 (TPGKSFQMKI…WIFEKLDTYE (132 aa)). Asn-523 is a glycosylation site (N-linked (GlcNAc...) asparagine).

It belongs to the glycosyltransferase 2 family. GalNAc-T subfamily. It depends on Mn(2+) as a cofactor.

Its subcellular location is the golgi apparatus membrane. The enzyme catalyses L-seryl-[protein] + UDP-N-acetyl-alpha-D-galactosamine = a 3-O-[N-acetyl-alpha-D-galactosaminyl]-L-seryl-[protein] + UDP + H(+). It carries out the reaction L-threonyl-[protein] + UDP-N-acetyl-alpha-D-galactosamine = a 3-O-[N-acetyl-alpha-D-galactosaminyl]-L-threonyl-[protein] + UDP + H(+). The protein operates within protein modification; protein glycosylation. Functionally, catalyzes the initial reaction in O-linked oligosaccharide biosynthesis, the transfer of an N-acetyl-D-galactosamine residue to a serine or threonine residue on the protein receptor. In Caenorhabditis elegans, this protein is Polypeptide N-acetylgalactosaminyltransferase 4 (gly-4).